A 349-amino-acid polypeptide reads, in one-letter code: Isopentenyl-diphosphate delta-isomerase (349 aa).

6-7 (RK) lines the substrate pocket. FMN-binding positions include 62-64 (AMT), S93, and N122. Position 152 (Q152) interacts with substrate. Position 153 (E153) interacts with Mg(2+). FMN contacts are provided by residues K184, T214, 258–259 (GG), and 280–281 (AG).

Belongs to the IPP isomerase type 2 family. In terms of assembly, homooctamer. Dimer of tetramers. The cofactor is FMN. NADPH is required as a cofactor. It depends on Mg(2+) as a cofactor.

It is found in the cytoplasm. The catalysed reaction is isopentenyl diphosphate = dimethylallyl diphosphate. Involved in the biosynthesis of isoprenoids. Catalyzes the 1,3-allylic rearrangement of the homoallylic substrate isopentenyl (IPP) to its allylic isomer, dimethylallyl diphosphate (DMAPP). The sequence is that of Isopentenyl-diphosphate delta-isomerase from Bacillus cereus (strain ATCC 14579 / DSM 31 / CCUG 7414 / JCM 2152 / NBRC 15305 / NCIMB 9373 / NCTC 2599 / NRRL B-3711).